We begin with the raw amino-acid sequence, 83 residues long: NAD(P)H-quinone oxidoreductase subunit L (83 aa).

The next 2 helical transmembrane spans lie at 15–35 and 53–73; these read LFVL…VPLA and LGVY…APFI.

Belongs to the complex I NdhL subunit family. As to quaternary structure, NDH-1 can be composed of about 15 different subunits; different subcomplexes with different compositions have been identified which probably have different functions.

Its subcellular location is the cellular thylakoid membrane. It carries out the reaction a plastoquinone + NADH + (n+1) H(+)(in) = a plastoquinol + NAD(+) + n H(+)(out). It catalyses the reaction a plastoquinone + NADPH + (n+1) H(+)(in) = a plastoquinol + NADP(+) + n H(+)(out). Its function is as follows. NDH-1 shuttles electrons from an unknown electron donor, via FMN and iron-sulfur (Fe-S) centers, to quinones in the respiratory and/or the photosynthetic chain. The immediate electron acceptor for the enzyme in this species is believed to be plastoquinone. Couples the redox reaction to proton translocation, and thus conserves the redox energy in a proton gradient. Cyanobacterial NDH-1 also plays a role in inorganic carbon-concentration. The polypeptide is NAD(P)H-quinone oxidoreductase subunit L (Synechococcus sp. (strain CC9902)).